A 99-amino-acid chain; its full sequence is RNA-binding protein Hfq (99 aa).

In terms of domain architecture, Sm spans 9–68; the sequence is DPYLNALRRERIPVSIYLVNGIKLQGQIESFDQFVILLKNTVNQMVYKHAISTVVPARSV. A disordered region spans residues 67-99; sequence SVSHHNNNAQQQYQQQAAQAASAQSNETSSQAE. Positions 72 to 99 are enriched in low complexity; sequence NNNAQQQYQQQAAQAASAQSNETSSQAE.

This sequence belongs to the Hfq family. In terms of assembly, homohexamer.

In terms of biological role, RNA chaperone that binds small regulatory RNA (sRNAs) and mRNAs to facilitate mRNA translational regulation in response to envelope stress, environmental stress and changes in metabolite concentrations. Also binds with high specificity to tRNAs. This is RNA-binding protein Hfq from Actinobacillus succinogenes (strain ATCC 55618 / DSM 22257 / CCUG 43843 / 130Z).